The chain runs to 226 residues: uncharacterized protein (226 aa).

The region spanning 71 to 207 (EPDDITVYFD…ADGLAKKILS (137 aa)) is the RNase H type-1 domain.

This is an uncharacterized protein from Bacillus subtilis (strain 168).